Reading from the N-terminus, the 402-residue chain is Potassium channel subfamily K member 9 (402 aa).

Over 1–8 (MKRQNVRT) the chain is Cytoplasmic. The helical transmembrane segment at 9–29 (LSLIACTFTYLLVGAAVFDAL) threads the bilayer. The Extracellular portion of the chain corresponds to 30 to 88 (ESDHEMREEEKLKAEEVRLRGKYNISSDDYQQLELVILQSEPHRAGVQWKFAGSFYFAI). The N-linked (GlcNAc...) asparagine glycan is linked to asparagine 53. An intramembrane region (pore-forming) is located at residues 89–101 (TVITTIGYGHAAP). 4 residues coordinate K(+): threonine 93, isoleucine 94, glycine 95, and tyrosine 96. The selectivity filter 1 stretch occupies residues 93 to 98 (TIGYGH). Residues 102 to 107 (GTDAGK) lie on the Extracellular side of the membrane. The chain crosses the membrane as a helical span at residues 108–128 (AFCMFYAVLGIPLTLVMFQSL). Residues 129–158 (GERMNTFVRYLLKRIKKCCGMRNTEVSMEN) lie on the Cytoplasmic side of the membrane. The chain crosses the membrane as a helical span at residues 159-179 (MVTVGFFSCMGTLCLGAAAFS). Over 180 to 194 (QCEDWSFFHAYYYCF) the chain is Extracellular. The segment at residues 195 to 207 (ITLTTIGFGDFVA) is an intramembrane region (pore-forming). Positions 199, 200, 201, and 202 each coordinate K(+). The interval 199–204 (TIGFGD) is selectivity filter 2. Residues 208 to 218 (LQAKGALQRKP) lie on the Extracellular side of the membrane. Residues 219–239 (FYVAFSFMYILVGLTVIGAFL) form a helical membrane-spanning segment. The Cytoplasmic portion of the chain corresponds to 240–402 (NLVVLRFLTM…HRLHLRRKSI (163 aa)). The X-gate stretch occupies residues 243 to 248 (VLRFLT).

This sequence belongs to the two pore domain potassium channel (TC 1.A.1.8) family. Homodimer. Heterodimer with KCNK1. Heterodimer with KCNK3. As to expression, expressed in adrenal glands mainly in outer zona glomerulosa and inner zona medullaris. Expressed in retinal ganglion cells. Expressed in dentate gyrus (at protein level).

It is found in the cell membrane. The protein resides in the mitochondrion inner membrane. The protein localises to the cell projection. It localises to the dendrite. It carries out the reaction K(+)(in) = K(+)(out). It catalyses the reaction Na(+)(in) = Na(+)(out). Inhibited by NTS:NTSR1 signaling in dentate gyrus granule cells. In terms of biological role, k(+) channel that conducts voltage-dependent outward rectifying currents upon membrane depolarization. Voltage sensing is coupled to K(+) electrochemical gradient in an 'ion flux gating' mode where outward but not inward ion flow opens the gate. Changes ion selectivity and becomes permeable to Na(+) ions in response to extracellular acidification. Protonation of the pH sensor His-98 stabilizes C-type inactivation conformation likely converting the channel from outward K(+)-conducting, to inward Na(+)-conducting to nonconductive state. Homo- and heterodimerizes to form functional channels with distinct regulatory and gating properties. Allows K(+) currents with fast-gating kinetics important for the repolarization and hyperpolarization phases of action potentials. In granule neurons, hyperpolarizes the resting membrane potential to limit intrinsic neuronal excitability, but once the action potential threshold is reached, supports high-frequency action potential firing and increased neuronal excitability. Homomeric and/or heteromeric KCNK3:KCNK9 channels operate in cerebellar granule cells, whereas heteromeric KCNK1:KCNK9 enables currents in hippocampal dentate gyrus granule neurons. Dispensable for central chemosensory respiration i.e. breathing controlled by brainstem CO2/pH, it rather conducts pH-sensitive currents and controls the firing rate of serotonergic raphe neurons involved in potentiation of the respiratory chemoreflex. In retinal ganglion cells, mediates outward rectifying currents that regulate action potentials in response to acidification of the synaptic cleft. Involved in transmission of image-forming and nonimage-forming visual information in the retina. In adrenal gland, contributes to the maintenance of a hyperpolarized resting membrane potential of aldosterone-producing cells at zona glomerulosa and limits aldosterone release as part of a regulatory mechanism that controls arterial blood pressure and electrolyte homeostasis. The protein is Potassium channel subfamily K member 9 of Mus musculus (Mouse).